The primary structure comprises 316 residues: Small kinetochore-associated protein (316 aa).

Serine 128 is subject to Phosphoserine. The interval 159–316 (VRKGYKPLSK…LKEMEQLLEM (158 aa)) is interaction with SPAG5. Coiled coils occupy residues 166 to 216 (LSKQ…FRDN) and 248 to 316 (SMLL…LLEM).

Part of an astrin (SPAG5)-kinastrin (SKAP) complex containing KNSTRN, SPAG5, PLK1, DYNLL1 and SGO2. Interacts with SPAG5. Directly binds to microtubules, although at relatively low affinity. Interacts with CENPE; this interaction greatly favors microtubule-binding. Interacts with DSN1/MIS13; leading to localization to kinetochores. Interacts with MAPRE1/EB1; leading to localization to the microtubule plus ends. Interacts with PRPF19. Interacts with DYNLL1. Interacts with MAP4. Widely expressed, including in skin.

It is found in the nucleus. Its subcellular location is the chromosome. It localises to the centromere. The protein resides in the kinetochore. The protein localises to the cytoplasm. It is found in the cytoskeleton. Its subcellular location is the spindle pole. It localises to the microtubule organizing center. Essential component of the mitotic spindle required for faithful chromosome segregation and progression into anaphase. Promotes the metaphase-to-anaphase transition and is required for chromosome alignment, normal timing of sister chromatid segregation, and maintenance of spindle pole architecture. The astrin (SPAG5)-kinastrin (SKAP) complex promotes stable microtubule-kinetochore attachments. Required for kinetochore oscillations and dynamics of microtubule plus-ends during live cell mitosis, possibly by forming a link between spindle microtubule plus-ends and mitotic chromosomes to achieve faithful cell division. May be involved in UV-induced apoptosis via its interaction with PRPF19; however, these results need additional evidences. The sequence is that of Small kinetochore-associated protein from Homo sapiens (Human).